Here is a 791-residue protein sequence, read N- to C-terminus: Diacylglycerol kinase gamma (791 aa).

2 disordered regions span residues 82-103 (KPRH…ANSA) and 117-154 (DEAC…SSSS). The segment covering 83–92 (PRHETSDHPT) has biased composition (basic and acidic residues). Residues 94–103 (GASNSEANSA) are compositionally biased toward polar residues. EF-hand domains are found at residues 175-210 (RPQD…MLHI) and 220-255 (ELRP…TIPL). Positions 188, 190, 192, 199, 233, 235, 237, and 244 each coordinate Ca(2+). 2 consecutive Phorbol-ester/DAG-type zinc fingers follow at residues 271–321 (RHAW…IPGC) and 336–385 (QHAW…LCDG). One can recognise a DAGKc domain in the interval 430-564 (PGTHPLLVLV…LDRWHLEVIP (135 aa)). The disordered stretch occupies residues 768 to 791 (APMMMGPPQKSSFFSLRRKSRSKD).

It belongs to the eukaryotic diacylglycerol kinase family. As to expression, predominantly expressed in retina and in a much lesser extent in the brain. Other tissues contain extremely low levels of DGK-gamma.

The protein localises to the membrane. It is found in the cytoplasm. The protein resides in the cytosol. It localises to the cytoskeleton. It catalyses the reaction a 1,2-diacyl-sn-glycerol + ATP = a 1,2-diacyl-sn-glycero-3-phosphate + ADP + H(+). The enzyme catalyses 1,2-didecanoyl-sn-glycerol + ATP = 1,2-didecanoyl-sn-glycero-3-phosphate + ADP + H(+). The catalysed reaction is 1-octadecanoyl-2-(5Z,8Z,11Z,14Z-eicosatetraenoyl)-sn-glycerol + ATP = 1-octadecanoyl-2-(5Z,8Z,11Z,14Z-eicosatetraenoyl)-sn-glycero-3-phosphate + ADP + H(+). It carries out the reaction 1,2-di-(9Z-octadecenoyl)-sn-glycerol + ATP = 1,2-di-(9Z-octadecenoyl)-sn-glycero-3-phosphate + ADP + H(+). It catalyses the reaction 1-octadecanoyl-2-(9Z,12Z)-octadecadienoyl-sn-glycerol + ATP = 1-octadecanoyl-2-(9Z,12Z-octadecadienoyl)-sn-glycero-3-phosphate + ADP + H(+). Its pathway is lipid metabolism; glycerolipid metabolism. The activity is calcium-dependent. Requires phosphatidylserine for maximal activity. Diacylglycerol kinase that converts diacylglycerol/DAG into phosphatidic acid/phosphatidate/PA and regulates the respective levels of these two bioactive lipids. Thereby, acts as a central switch between the signaling pathways activated by these second messengers with different cellular targets and opposite effects in numerous biological processes. Has no apparent specificity with regard to the acyl compositions of diacylglycerol. Specifically expressed in the cerebellum where it controls the level of diacylglycerol which in turn regulates the activity of protein kinase C gamma. Through protein kinase C gamma, indirectly regulates the dendritic development of Purkinje cells, cerebellar long term depression and ultimately cerebellar motor coordination. The protein is Diacylglycerol kinase gamma (DGKG) of Homo sapiens (Human).